We begin with the raw amino-acid sequence, 491 residues long: Galactose-1-phosphate uridylyltransferase (491 aa).

The protein belongs to the galactose-1-phosphate uridylyltransferase type 2 family.

It localises to the cytoplasm. It carries out the reaction alpha-D-galactose 1-phosphate + UDP-alpha-D-glucose = alpha-D-glucose 1-phosphate + UDP-alpha-D-galactose. Its pathway is carbohydrate metabolism; galactose metabolism. This is Galactose-1-phosphate uridylyltransferase (galT) from Streptococcus mutans serotype c (strain ATCC 700610 / UA159).